A 64-amino-acid polypeptide reads, in one-letter code: Alpha-mammal toxin AnCra1 (64 aa).

The region spanning 2 to 64 (KDGYIVDDVN…VRTKGPGRCN (63 aa)) is the LCN-type CS-alpha/beta domain. 4 disulfides stabilise this stretch: cysteine 12-cysteine 63, cysteine 16-cysteine 36, cysteine 22-cysteine 46, and cysteine 26-cysteine 48.

Belongs to the long (4 C-C) scorpion toxin superfamily. Sodium channel inhibitor family. Alpha subfamily. Expressed by the venom gland.

Its subcellular location is the secreted. Alpha toxins bind voltage-independently at site-3 of sodium channels (Nav) and inhibit the inactivation of the activated channels, thereby blocking neuronal transmission. This toxin is active against mammals. The recombinant toxin selectively inhibits the fast inactivation of hNav1.7/SCN9A channel (EC(50)=136.7 nM). Is potent in inhibiting the fast inactivation of hNav1.7 and has little effect on the steady-state inactivation. In vivo, intravenous injection into mice induces muscle contraction, leading to severe paralysis and death. This Androctonus crassicauda (Arabian fat-tailed scorpion) protein is Alpha-mammal toxin AnCra1.